The primary structure comprises 445 residues: tRNA(Ile)-lysidine synthase (445 aa).

33–38 contacts ATP; it reads SGGLDS.

Belongs to the tRNA(Ile)-lysidine synthase family.

It localises to the cytoplasm. It catalyses the reaction cytidine(34) in tRNA(Ile2) + L-lysine + ATP = lysidine(34) in tRNA(Ile2) + AMP + diphosphate + H(+). Functionally, ligates lysine onto the cytidine present at position 34 of the AUA codon-specific tRNA(Ile) that contains the anticodon CAU, in an ATP-dependent manner. Cytidine is converted to lysidine, thus changing the amino acid specificity of the tRNA from methionine to isoleucine. This is tRNA(Ile)-lysidine synthase from Pseudomonas syringae pv. tomato (strain ATCC BAA-871 / DC3000).